The following is a 631-amino-acid chain: Peptide-N(4)-(N-acetyl-beta-glucosaminyl)asparagine amidase (631 aa).

The PUB domain occupies 34–97 (EAVRILLVLL…PSSNAYTLPT (64 aa)). Position 126 is a phosphoserine (Ser126). Cys246, Cys249, Cys272, and Cys273 together coordinate Zn(2+). Cys296 serves as the catalytic Nucleophile. Active-site residues include His323 and Asp340. Positions 441–631 (ELKGRSSGSL…YPFDLQVQLH (191 aa)) constitute a PAW domain.

This sequence belongs to the transglutaminase-like superfamily. PNGase family. It depends on Zn(2+) as a cofactor.

It localises to the cytoplasm. It carries out the reaction Hydrolysis of an N(4)-(acetyl-beta-D-glucosaminyl)asparagine residue in which the glucosamine residue may be further glycosylated, to yield a (substituted) N-acetyl-beta-D-glucosaminylamine and a peptide containing an aspartate residue.. Specifically deglycosylates the denatured form of N-linked glycoproteins in the cytoplasm and assists their proteasome-mediated degradation. Cleaves the beta-aspartyl-glucosamine (GlcNAc) of the glycan and the amide side chain of Asn, converting Asn to Asp. Prefers proteins containing high-mannose over those bearing complex type oligosaccharides. Can recognize misfolded proteins in the endoplasmic reticulum that are exported to the cytosol to be destroyed and deglycosylate them, while it has no activity toward native proteins. Deglycosylation is a prerequisite for subsequent proteasome-mediated degradation of some, but not all, misfolded glycoproteins. The sequence is that of Peptide-N(4)-(N-acetyl-beta-glucosaminyl)asparagine amidase (Pngl) from Drosophila melanogaster (Fruit fly).